A 277-amino-acid polypeptide reads, in one-letter code: 3-methyl-2-oxobutanoate hydroxymethyltransferase (277 aa).

Mg(2+)-binding residues include D43 and D82. Residues 43–44 (DS), D82, and K112 contribute to the 3-methyl-2-oxobutanoate site. Position 114 (E114) interacts with Mg(2+). E181 functions as the Proton acceptor in the catalytic mechanism.

Belongs to the PanB family. In terms of assembly, homodecamer; pentamer of dimers. Requires Mg(2+) as cofactor.

The protein resides in the cytoplasm. The catalysed reaction is 3-methyl-2-oxobutanoate + (6R)-5,10-methylene-5,6,7,8-tetrahydrofolate + H2O = 2-dehydropantoate + (6S)-5,6,7,8-tetrahydrofolate. The protein operates within cofactor biosynthesis; (R)-pantothenate biosynthesis; (R)-pantoate from 3-methyl-2-oxobutanoate: step 1/2. In terms of biological role, catalyzes the reversible reaction in which hydroxymethyl group from 5,10-methylenetetrahydrofolate is transferred onto alpha-ketoisovalerate to form ketopantoate. In Bacillus licheniformis (strain ATCC 14580 / DSM 13 / JCM 2505 / CCUG 7422 / NBRC 12200 / NCIMB 9375 / NCTC 10341 / NRRL NRS-1264 / Gibson 46), this protein is 3-methyl-2-oxobutanoate hydroxymethyltransferase.